Consider the following 572-residue polypeptide: Phosphoenolpyruvate-protein phosphotransferase (572 aa).

His191 functions as the Tele-phosphohistidine intermediate in the catalytic mechanism. Phosphoenolpyruvate-binding residues include Arg298 and Arg334. The Mg(2+) site is built by Glu433 and Asp457. Phosphoenolpyruvate-binding positions include 456-457 (ND) and Arg467. The active-site Proton donor is Cys504.

It belongs to the PEP-utilizing enzyme family. As to quaternary structure, homodimer. The cofactor is Mg(2+).

The protein resides in the cytoplasm. The enzyme catalyses L-histidyl-[protein] + phosphoenolpyruvate = N(pros)-phospho-L-histidyl-[protein] + pyruvate. General (non sugar-specific) component of the phosphoenolpyruvate-dependent sugar phosphotransferase system (sugar PTS). This major carbohydrate active-transport system catalyzes the phosphorylation of incoming sugar substrates concomitantly with their translocation across the cell membrane. Enzyme I transfers the phosphoryl group from phosphoenolpyruvate (PEP) to the phosphoryl carrier protein (HPr). This chain is Phosphoenolpyruvate-protein phosphotransferase (ptsI), found in Staphylococcus aureus (strain Mu50 / ATCC 700699).